Reading from the N-terminus, the 113-residue chain is Large ribosomal subunit protein uL22 (113 aa).

Belongs to the universal ribosomal protein uL22 family. As to quaternary structure, part of the 50S ribosomal subunit.

Its function is as follows. This protein binds specifically to 23S rRNA; its binding is stimulated by other ribosomal proteins, e.g. L4, L17, and L20. It is important during the early stages of 50S assembly. It makes multiple contacts with different domains of the 23S rRNA in the assembled 50S subunit and ribosome. In terms of biological role, the globular domain of the protein is located near the polypeptide exit tunnel on the outside of the subunit, while an extended beta-hairpin is found that lines the wall of the exit tunnel in the center of the 70S ribosome. This chain is Large ribosomal subunit protein uL22, found in Natranaerobius thermophilus (strain ATCC BAA-1301 / DSM 18059 / JW/NM-WN-LF).